Here is a 541-residue protein sequence, read N- to C-terminus: Chaperonin GroEL 2 (541 aa).

Residues 30-33 (TLGP), Lys51, 87-91 (DGTTT), Gly415, and Asp496 contribute to the ATP site.

The protein belongs to the chaperonin (HSP60) family. As to quaternary structure, forms a cylinder of 14 subunits composed of two heptameric rings stacked back-to-back. Interacts with the co-chaperonin GroES.

It localises to the cytoplasm. It carries out the reaction ATP + H2O + a folded polypeptide = ADP + phosphate + an unfolded polypeptide.. Together with its co-chaperonin GroES, plays an essential role in assisting protein folding. The GroEL-GroES system forms a nano-cage that allows encapsulation of the non-native substrate proteins and provides a physical environment optimized to promote and accelerate protein folding. This is Chaperonin GroEL 2 from Bradyrhizobium sp. (strain BTAi1 / ATCC BAA-1182).